The primary structure comprises 223 residues: Ribonuclease 3 (223 aa).

Residues 3–125 form the RNase III domain; sequence LERLQKKLGY…IIAAVYLDAG (123 aa). A Mg(2+)-binding site is contributed by Glu38. Asp42 is an active-site residue. Residues Asp111 and Glu114 each contribute to the Mg(2+) site. Glu114 is an active-site residue. The 71-residue stretch at 152–222 folds into the DRBM domain; sequence DPKTRLQEYL…ALQVIKVLGI (71 aa).

The protein belongs to the ribonuclease III family. As to quaternary structure, homodimer. It depends on Mg(2+) as a cofactor.

The protein resides in the cytoplasm. The enzyme catalyses Endonucleolytic cleavage to 5'-phosphomonoester.. In terms of biological role, digests double-stranded RNA. Involved in the processing of primary rRNA transcript to yield the immediate precursors to the large and small rRNAs (23S and 16S). Processes some mRNAs, and tRNAs when they are encoded in the rRNA operon. Processes pre-crRNA and tracrRNA of type II CRISPR loci if present in the organism. This Glaesserella parasuis serovar 5 (strain SH0165) (Haemophilus parasuis) protein is Ribonuclease 3.